Here is a 325-residue protein sequence, read N- to C-terminus: Diadenosine 5',5'''-P1,P4-tetraphosphate phosphorylase 2 (325 aa).

Substrate-binding positions include K53, 92-93 (NK), N148, and 154-157 (GSSQ). H161 (nucleophile) is an active-site residue. Residues Q163, 277–279 (NST), M284, and K288 each bind substrate.

Belongs to the ATP adenylyltransferase family. In terms of assembly, monomer. A divalent metal cation serves as cofactor.

The protein resides in the cytoplasm. It localises to the nucleus. The catalysed reaction is ADP + ATP + H(+) = P(1),P(4)-bis(5'-adenosyl) tetraphosphate + phosphate. The enzyme catalyses sulfate + ADP + H(+) = adenosine 5'-phosphosulfate + phosphate. Its function is as follows. Ap4A phosphorylase catalyzes the phosphorolytic degradation of bis(5'-adenosyl) tetraphosphate (Ap4A) into ADP and ATP. Can also use other Np4N' nucleotides (where N and N' stand for A,C,G or U) as substrates, but prefers A-containing substrates. Cannot catalyze the reverse reaction. Additionally, this enzyme can also catalyze the phosphorolytic degradation of adenosine 5'-phosphosulfate (AMPS) into ADP and sulfate, the reversible exchange reaction between inorganic phosphate and the beta-phosphate of a nucleoside diphosphate (NDP), and the synthesis of Ap4A from AMPS plus ATP. The sequence is that of Diadenosine 5',5'''-P1,P4-tetraphosphate phosphorylase 2 from Saccharomyces cerevisiae (strain ATCC 204508 / S288c) (Baker's yeast).